We begin with the raw amino-acid sequence, 362 residues long: Ferrochelatase (362 aa).

Histidine 212 and glutamate 294 together coordinate Fe cation.

The protein belongs to the ferrochelatase family.

It localises to the cytoplasm. It carries out the reaction heme b + 2 H(+) = protoporphyrin IX + Fe(2+). It functions in the pathway porphyrin-containing compound metabolism; protoheme biosynthesis; protoheme from protoporphyrin-IX: step 1/1. In terms of biological role, catalyzes the ferrous insertion into protoporphyrin IX. The sequence is that of Ferrochelatase from Leptospira biflexa.